We begin with the raw amino-acid sequence, 273 residues long: Undecaprenyl-diphosphatase (273 aa).

7 consecutive transmembrane segments (helical) span residues 13-35, 45-62, 82-102, 108-128, 186-206, 219-239, and 250-270; these read GLVE…VFGN, VFEI…VFEY, FVLN…LFDK, LFNP…ILWV, TEFS…YDVL, LILI…KALL, and FAYY…SGWI.

It belongs to the UppP family.

The protein localises to the cell inner membrane. It catalyses the reaction di-trans,octa-cis-undecaprenyl diphosphate + H2O = di-trans,octa-cis-undecaprenyl phosphate + phosphate + H(+). In terms of biological role, catalyzes the dephosphorylation of undecaprenyl diphosphate (UPP). Confers resistance to bacitracin. The polypeptide is Undecaprenyl-diphosphatase (Neisseria gonorrhoeae (strain NCCP11945)).